The following is a 756-amino-acid chain: Protein SDA1 homolog (756 aa).

The stretch at 227–282 (EEEEDEAVKEKRAKDNFRKKSLAHRVGKKTKGRITRLAKSKVDLKKAKQEEDNKLQ) forms a coiled coil. 2 stretches are compositionally biased toward acidic residues: residues 494-514 (AGEEFESDDDSDSDSDDEGWE) and 521-596 (ADDD…EEEE). Disordered stretches follow at residues 494–615 (AGEE…VLRT) and 638–756 (AREN…RGRH). Over residues 605-615 (QQKEKVEVLRT) the composition is skewed to basic and acidic residues. Residues 647–656 (DMDQDDDENG) show a composition bias toward acidic residues. Basic and acidic residues predominate over residues 677–691 (EEKLERIARAKEGRD). A compositionally biased stretch (basic residues) spans 725–735 (KTKKVRGKSLK). Basic and acidic residues predominate over residues 736–749 (SFRDKQIGQREHSA).

The protein belongs to the SDA1 family.

The protein resides in the nucleus. It is found in the nucleolus. Required for 60S pre-ribosomal subunits export to the cytoplasm. This chain is Protein SDA1 homolog (sdad1), found in Dictyostelium discoideum (Social amoeba).